A 247-amino-acid chain; its full sequence is UPF0259 membrane protein BUAP5A_271 (247 aa).

6 consecutive transmembrane segments (helical) span residues 20–40, 85–105, 114–134, 137–157, 188–208, and 218–238; these read IGAI…IDMF, IMES…LISV, IVSS…LNFL, FIIQ…SIIL, IIGP…MLLA, and LFLI…IYLF.

The protein belongs to the UPF0259 family.

Its subcellular location is the cell membrane. The chain is UPF0259 membrane protein BUAP5A_271 from Buchnera aphidicola subsp. Acyrthosiphon pisum (strain 5A).